We begin with the raw amino-acid sequence, 712 residues long: U11/U12 small nuclear ribonucleoprotein 48 kDa protein (712 aa).

Residues 98 to 125 (FVRCPFDSNHFMPPEALFLHSLRCPNTL) form a CHHC U11-48K-type zinc finger. Residues cysteine 101, histidine 107, histidine 117, and cysteine 121 each coordinate Zn(2+). Residues 562-712 (QSRSPIGNDQ…EDRYIPTEKE (151 aa)) form a disordered region. Basic and acidic residues-rich tracts occupy residues 585–595 (KQWKGENRADI), 603–614 (QNSDKVKRHDEY), 629–663 (KHSDRRDDKLRDRRKDKHNDRRDDEFTRTKRHSIE), 672–693 (SSREKSSSDYKTKRDDPYDRRS), and 702–712 (FEDRYIPTEKE).

Component of the U11/U12 snRNPs that are part of the U12-type spliceosome. Not found in the major spliceosome.

It is found in the nucleus. Functionally, likely involved in U12-type 5' splice site recognition. This chain is U11/U12 small nuclear ribonucleoprotein 48 kDa protein (SNRNP48), found in Arabidopsis thaliana (Mouse-ear cress).